We begin with the raw amino-acid sequence, 111 residues long: uncharacterized protein (111 aa).

The next 2 membrane-spanning stretches (helical) occupy residues 27-47 (IIVL…GYKF) and 80-100 (IFTG…ISAI).

The protein localises to the membrane. This is an uncharacterized protein from Acanthamoeba polyphaga (Amoeba).